The following is a 927-amino-acid chain: Isoleucine--tRNA ligase (927 aa).

Residues 57-67 carry the 'HIGH' region motif; that stretch reads PFANGNIHMGH. L-isoleucyl-5'-AMP is bound at residue E553. Positions 594-598 match the 'KMSKS' region motif; sequence KMSKS. ATP is bound at residue K597. Zn(2+) contacts are provided by C886, C889, C906, and C909.

It belongs to the class-I aminoacyl-tRNA synthetase family. IleS type 1 subfamily. In terms of assembly, monomer. Zn(2+) serves as cofactor.

The protein resides in the cytoplasm. The enzyme catalyses tRNA(Ile) + L-isoleucine + ATP = L-isoleucyl-tRNA(Ile) + AMP + diphosphate. Functionally, catalyzes the attachment of isoleucine to tRNA(Ile). As IleRS can inadvertently accommodate and process structurally similar amino acids such as valine, to avoid such errors it has two additional distinct tRNA(Ile)-dependent editing activities. One activity is designated as 'pretransfer' editing and involves the hydrolysis of activated Val-AMP. The other activity is designated 'posttransfer' editing and involves deacylation of mischarged Val-tRNA(Ile). This chain is Isoleucine--tRNA ligase, found in Lactobacillus acidophilus (strain ATCC 700396 / NCK56 / N2 / NCFM).